The sequence spans 446 residues: D(1A) dopamine receptor (446 aa).

Residues 1–22 (MAPNTSTMDETGLPVERDFSFR) are Extracellular-facing. The N-linked (GlcNAc...) asparagine glycan is linked to asparagine 4. Residues 23-48 (ILTACFLSLLILSTLLGNTLVCAAVI) form a helical membrane-spanning segment. Residues 49–59 (RFRHLRSKVTN) are Cytoplasmic-facing. The helical transmembrane segment at 60-86 (FFVISLAVSDLLVAVLVMPWKAVAEIA) threads the bilayer. The Extracellular segment spans residues 87 to 95 (GFWPFGSFC). A disulfide bond links cysteine 95 and cysteine 186. Residues 96–118 (NIWVAFDIMCSTASILNLCVISV) traverse the membrane as a helical segment. Topologically, residues 119 to 137 (DRYWAISSPFQYERKMTPK) are cytoplasmic. A helical membrane pass occupies residues 138 to 162 (AAFILISVAWTLSVLISFIPVQLSW). At 163-192 (HKAKPTWPLDGNFTSLEDAEDDNCDTRLSR) the chain is on the extracellular side. The chain crosses the membrane as a helical span at residues 193–218 (TYAISSSLISFYIPVAIMIVTYTSIY). The Cytoplasmic segment spans residues 219 to 272 (RIAQKQIRRISALERAAVHAKNCQTTTGNGNPVECSQSESSFKMSFKRETKVLK). Residues 273–299 (TLSVIMGVFVCCWLPFFISNCMVPFCG) traverse the membrane as a helical segment. At 300–312 (SEETQPFCIDSIT) the chain is on the extracellular side. A helical transmembrane segment spans residues 313–337 (FDVFVWFGWANSSLNPIIYAFNADF). At 338–446 (QKAFSTLLGC…PVTHSGQHST (109 aa)) the chain is on the cytoplasmic side. Residues cysteine 347 and cysteine 351 are each lipidated (S-palmitoyl cysteine). The residue at position 441 (serine 441) is a Phosphoserine.

This sequence belongs to the G-protein coupled receptor 1 family. As to quaternary structure, interacts with DNAJC14 via its C-terminus. Interacts with DRD2. Interacts with DORIP1.

The protein resides in the cell membrane. Its subcellular location is the endoplasmic reticulum membrane. It is found in the cell projection. It localises to the cilium membrane. The protein localises to the dendrite. The protein resides in the dendritic spine. Functionally, dopamine receptor whose activity is mediated by G proteins which activate adenylyl cyclase. This Mus musculus (Mouse) protein is D(1A) dopamine receptor (Drd1).